Here is a 100-residue protein sequence, read N- to C-terminus: MTPWYLYLIRTADNALYTGITTDVARRYRQHQTGKGAKALRGKGELTLAFAAQVGDRSLALRIEYRIKQLTKRQKERLVTEREAFEALLSSLQTPVLKND.

The region spanning 2–77 is the GIY-YIG domain; the sequence is TPWYLYLIRT…KQLTKRQKER (76 aa).

Belongs to the UPF0213 family.

The polypeptide is UPF0213 protein YhbQ (Salmonella choleraesuis (strain SC-B67)).